Here is an 87-residue protein sequence, read N- to C-terminus: Small ribosomal subunit protein bS20 (87 aa).

This sequence belongs to the bacterial ribosomal protein bS20 family.

Functionally, binds directly to 16S ribosomal RNA. The chain is Small ribosomal subunit protein bS20 from Mycoplasma pneumoniae (strain ATCC 29342 / M129 / Subtype 1) (Mycoplasmoides pneumoniae).